The chain runs to 352 residues: D-alanine--D-alanine ligase (352 aa).

Positions 133-342 (KTVFAAAGLP…FPKLVDRLIQ (210 aa)) constitute an ATP-grasp domain. Position 169 to 224 (169 to 224 (DETIGYPNFVKPANLGSSVGISKVRSRLELEAALDSAASFDRRIVVEAGVVAREVE)) interacts with ATP. 3 residues coordinate Mg(2+): aspartate 295, glutamate 309, and asparagine 311.

Belongs to the D-alanine--D-alanine ligase family. Mg(2+) is required as a cofactor. Mn(2+) serves as cofactor.

The protein resides in the cytoplasm. The catalysed reaction is 2 D-alanine + ATP = D-alanyl-D-alanine + ADP + phosphate + H(+). It functions in the pathway cell wall biogenesis; peptidoglycan biosynthesis. In terms of biological role, cell wall formation. The polypeptide is D-alanine--D-alanine ligase (Acaryochloris marina (strain MBIC 11017)).